The chain runs to 603 residues: NADPH-dependent diflavin oxidoreductase 1 (603 aa).

Positions 10–155 (VTILYGSETG…YYSEWETNLL (146 aa)) constitute a Flavodoxin-like domain. FMN is bound by residues 16-21 (SETGNA), 64-67 (STTG), 102-111 (IGDSSYPKFN), and E137. An FAD-binding FR-type domain is found at 209–451 (TNLLLGSVKA…HKSNLKFELP (243 aa)). FAD-binding positions include R359, 390–393 (RLFS), and 422–425 (GLCT). NADP(+)-binding positions include T465 and 521 to 522 (SR). W603 serves as a coordination point for FAD.

It belongs to the NADPH-dependent diflavin oxidoreductase NDOR1 family. In the N-terminal section; belongs to the flavodoxin family. This sequence in the C-terminal section; belongs to the flavoprotein pyridine nucleotide cytochrome reductase family. As to quaternary structure, interacts with DRE2; as part of the cytosolic iron-sulfur (Fe-S) protein assembly (CIA) machinery. It depends on FAD as a cofactor. FMN serves as cofactor.

The protein localises to the cytoplasm. It is found in the mitochondrion. It carries out the reaction 2 oxidized [2Fe-2S]-[protein] + NADPH = 2 reduced [2Fe-2S]-[protein] + NADP(+) + H(+). Its function is as follows. NADPH-dependent reductase which is a central component of the cytosolic iron-sulfur (Fe-S) protein assembly (CIA) machinery. Transfers electrons from NADPH via its FAD and FMN prosthetic groups to the [2Fe-2S] cluster of DRE2, another key component of the CIA machinery. In turn, this reduced cluster provides electrons for assembly of cytosolic iron-sulfur cluster proteins. Positively controls H(2)O(2)-induced cell death. This is NADPH-dependent diflavin oxidoreductase 1 from Debaryomyces hansenii (strain ATCC 36239 / CBS 767 / BCRC 21394 / JCM 1990 / NBRC 0083 / IGC 2968) (Yeast).